Here is a 509-residue protein sequence, read N- to C-terminus: Putative (R)-citramalate synthase CimA (509 aa).

One can recognise a Pyruvate carboxyltransferase domain in the interval 14–267 (VRIFDTTLRD…DTGIRTERLT (254 aa)).

The protein belongs to the alpha-IPM synthase/homocitrate synthase family. Homodimer.

The enzyme catalyses pyruvate + acetyl-CoA + H2O = (3R)-citramalate + CoA + H(+). The protein operates within amino-acid biosynthesis; L-isoleucine biosynthesis; 2-oxobutanoate from pyruvate: step 1/3. Its function is as follows. Catalyzes the condensation of pyruvate and acetyl-coenzyme A to form (R)-citramalate. The polypeptide is Putative (R)-citramalate synthase CimA (cimA) (Methanopyrus kandleri (strain AV19 / DSM 6324 / JCM 9639 / NBRC 100938)).